The chain runs to 164 residues: Serine/arginine-rich splicing factor 3 (164 aa).

Position 1 is an N-acetylmethionine (Met-1). The sufficient for interaction with NXF1 and SRSP stretch occupies residues 1-90 (MHRDSCPLDC…SNGEKRSRNR (90 aa)). At Ser-5 the chain carries Phosphoserine. The RRM domain maps to 10 to 83 (CKVYVGNLGN…CRVRVELSNG (74 aa)). An N6-acetyllysine modification is found at Lys-23. Residues 81–164 (SNGEKRSRNR…RSRSRSNERK (84 aa)) are disordered. Basic residues predominate over residues 107-128 (RSPPPRRRSPRRRSFSRSRSRS). Residues 119–133 (RSFSRSRSRSLSRDR) form a B-1 repeat. A 2 X approximate repeats, basic region spans residues 119–164 (RSFSRSRSRSLSRDRRRERSLSRERNHKPSRSFSRSRSRSRSNERK). The span at 129 to 142 (LSRDRRRERSLSRE) shows a compositional bias: basic and acidic residues. Basic residues predominate over residues 143-158 (RNHKPSRSFSRSRSRS). The stretch at 149-164 (RSFSRSRSRSRSNERK) is one B-2 repeat.

This sequence belongs to the splicing factor SR family. Interacts with CPSF6. Interacts with RBMY1A1. Interacts with SREK1/SFRS12. Interacts with NXF1. Interacts with YTHDC1, leading to recruitment to RNA elements adjacent to m6A sites. Interacts with SRSP; increases SRSF3 binding to specific exons. Post-translationally, phosphorylated by CLK1, CLK2, CLK3 and CLK4. Extensively phosphorylated on serine residues in the RS domain.

It localises to the nucleus. Its subcellular location is the nucleus speckle. The protein resides in the cytoplasm. In terms of biological role, splicing factor, which binds the consensus motif 5'-C[ACU][AU]C[ACU][AC]C-3' within pre-mRNA and promotes specific exons inclusion during alternative splicing. Interaction with YTHDC1, a RNA-binding protein that recognizes and binds N6-methyladenosine (m6A)-containing RNAs, promotes recruitment of SRSF3 to its mRNA-binding elements adjacent to m6A sites within exons. Also functions as an adapter involved in mRNA nuclear export. Binds mRNA which is thought to be transferred to the NXF1-NXT1 heterodimer for export (TAP/NXF1 pathway); enhances NXF1-NXT1 RNA-binding activity. Involved in nuclear export of m6A-containing mRNAs via interaction with YTHDC1: interaction with YTHDC1 facilitates m6A-containing mRNA-binding to both SRSF3 and NXF1, promoting mRNA nuclear export. The chain is Serine/arginine-rich splicing factor 3 (SRSF3) from Bos taurus (Bovine).